We begin with the raw amino-acid sequence, 480 residues long: 3,6-anhydro-alpha-L-galactose dehydrogenase (480 aa).

NADP(+)-binding positions include 149 to 150 (WN), 173 to 176 (KPTS), and 226 to 227 (GS). The Proton acceptor role is filled by Glu248. Leu249 is a binding site for NADP(+). Cys282 acts as the Nucleophile in catalysis. An NADP(+)-binding site is contributed by Glu383.

Belongs to the aldehyde dehydrogenase family.

The catalysed reaction is 3,6-anhydro-alpha-L-galactopyranose + NADP(+) + H2O = 3,6-anhydro-L-galactonate + NADPH + 2 H(+). It carries out the reaction 3,6-anhydro-alpha-L-galactopyranose + NAD(+) + H2O = 3,6-anhydro-L-galactonate + NADH + 2 H(+). Involved in the degradation of 3,6-anhydro-L-galactose, which is the major monomeric sugar of red macroalgae. Catalyzes the oxidation of 3,6-anhydro-L-galactose (AHG) to form 3,6-anhydrogalactonate (AHGA). This chain is 3,6-anhydro-alpha-L-galactose dehydrogenase, found in Vibrio sp. (strain EJY3).